The following is a 166-amino-acid chain: Small ribosomal subunit protein uS5 (166 aa).

The 64-residue stretch at 11-74 (LQEKLIAVNR…EKARRNMINV (64 aa)) folds into the S5 DRBM domain.

This sequence belongs to the universal ribosomal protein uS5 family. As to quaternary structure, part of the 30S ribosomal subunit. Contacts proteins S4 and S8.

With S4 and S12 plays an important role in translational accuracy. Functionally, located at the back of the 30S subunit body where it stabilizes the conformation of the head with respect to the body. In Pasteurella multocida (strain Pm70), this protein is Small ribosomal subunit protein uS5.